A 315-amino-acid chain; its full sequence is Zinc transport protein ZntB (315 aa).

Residues 1 to 250 (MGFMIEHWDF…RDEKTNKNSY (250 aa)) are Cytoplasmic-facing. Residues 251–271 (LFTLVATIFLPTSFLTGLLGI) traverse the membrane as a helical segment. At 272–282 (NIGGMPGVESS) the chain is on the periplasmic side. The helical transmembrane segment at 283–303 (MAFTWFCIALIVIFGLEWLLF) threads the bilayer. Topologically, residues 304–315 (KRLGFTNKTDDE) are cytoplasmic.

Belongs to the CorA metal ion transporter (MIT) (TC 1.A.35) family. As to quaternary structure, homopentamer. Can assemble pentamers in the absence of the transmembrane regions.

The protein resides in the cell inner membrane. The enzyme catalyses Zn(2+)(out) + H(+)(out) = Zn(2+)(in) + H(+)(in). Its function is as follows. Zinc transporter. Acts as a Zn(2+):proton symporter, which likely mediates zinc ion uptake. In Vibrio parahaemolyticus serotype O3:K6 (strain RIMD 2210633), this protein is Zinc transport protein ZntB.